The following is a 198-amino-acid chain: Interferon gamma (198 aa).

The signal sequence occupies residues 1–23; that stretch reads MMVSTARAVVCLSLCLCVCQVRG. N-linked (GlcNAc...) asparagine glycosylation is found at asparagine 31, asparagine 42, and asparagine 174. A disordered region spans residues 173–198; the sequence is SNNTKMQRRRRRRRRQARKVKTPTRA. The span at 178–198 shows a compositional bias: basic residues; that stretch reads MQRRRRRRRRQARKVKTPTRA.

Belongs to the type II (or gamma) interferon family. In terms of assembly, homodimer.

It is found in the secreted. Its function is as follows. Cytokine which binds to interferon gamma receptor 1 (ifngr1). Also binds with lower affinity to interferon gamma receptor 1-like (ifngr1l). Has activating effects on macrophages and neutrophils. In Paralichthys olivaceus (Bastard halibut), this protein is Interferon gamma.